We begin with the raw amino-acid sequence, 380 residues long: Queuine tRNA-ribosyltransferase (380 aa).

Aspartate 96 serves as the catalytic Proton acceptor. Substrate is bound by residues 96–100 (DSGGF), aspartate 150, glutamine 193, and glycine 220. The tract at residues 251–257 (GVGAPDS) is RNA binding. The active-site Nucleophile is aspartate 270. The RNA binding; important for wobble base 34 recognition stretch occupies residues 275-279 (TRIAR). Zn(2+) is bound by residues cysteine 308, cysteine 310, cysteine 313, and histidine 339.

Belongs to the queuine tRNA-ribosyltransferase family. As to quaternary structure, homodimer. Within each dimer, one monomer is responsible for RNA recognition and catalysis, while the other monomer binds to the replacement base PreQ1. It depends on Zn(2+) as a cofactor.

It carries out the reaction 7-aminomethyl-7-carbaguanine + guanosine(34) in tRNA = 7-aminomethyl-7-carbaguanosine(34) in tRNA + guanine. The protein operates within tRNA modification; tRNA-queuosine biosynthesis. Functionally, catalyzes the base-exchange of a guanine (G) residue with the queuine precursor 7-aminomethyl-7-deazaguanine (PreQ1) at position 34 (anticodon wobble position) in tRNAs with GU(N) anticodons (tRNA-Asp, -Asn, -His and -Tyr). Catalysis occurs through a double-displacement mechanism. The nucleophile active site attacks the C1' of nucleotide 34 to detach the guanine base from the RNA, forming a covalent enzyme-RNA intermediate. The proton acceptor active site deprotonates the incoming PreQ1, allowing a nucleophilic attack on the C1' of the ribose to form the product. After dissociation, two additional enzymatic reactions on the tRNA convert PreQ1 to queuine (Q), resulting in the hypermodified nucleoside queuosine (7-(((4,5-cis-dihydroxy-2-cyclopenten-1-yl)amino)methyl)-7-deazaguanosine). The chain is Queuine tRNA-ribosyltransferase from Streptococcus equi subsp. equi (strain 4047).